Consider the following 197-residue polypeptide: C-type lectin domain family 3 member A (197 aa).

Positions 1–24 (MAKNGLVIYILVITLLLDQTSCHA) are cleaved as a signal peptide. Intrachain disulfides connect Cys68–Cys78, Cys95–Cys191, and Cys167–Cys183. The region spanning 74–192 (FHKKCYLAAE…CHSSKRYICE (119 aa)) is the C-type lectin domain.

The protein resides in the secreted. In terms of biological role, promotes cell adhesion to laminin and fibronectin. The protein is C-type lectin domain family 3 member A (CLEC3A) of Bos taurus (Bovine).